The sequence spans 353 residues: Quinolinate synthase (353 aa).

Histidine 47 and serine 68 together coordinate iminosuccinate. Cysteine 113 lines the [4Fe-4S] cluster pocket. Residues 139–141 and serine 156 contribute to the iminosuccinate site; that span reads YAN. [4Fe-4S] cluster is bound at residue cysteine 200. Iminosuccinate-binding positions include 226 to 228 and threonine 243; that span reads HPE. A [4Fe-4S] cluster-binding site is contributed by cysteine 297.

It belongs to the quinolinate synthase family. Type 1 subfamily. [4Fe-4S] cluster is required as a cofactor.

It is found in the cytoplasm. It catalyses the reaction iminosuccinate + dihydroxyacetone phosphate = quinolinate + phosphate + 2 H2O + H(+). It participates in cofactor biosynthesis; NAD(+) biosynthesis; quinolinate from iminoaspartate: step 1/1. In terms of biological role, catalyzes the condensation of iminoaspartate with dihydroxyacetone phosphate to form quinolinate. The polypeptide is Quinolinate synthase (Pectobacterium atrosepticum (strain SCRI 1043 / ATCC BAA-672) (Erwinia carotovora subsp. atroseptica)).